A 686-amino-acid polypeptide reads, in one-letter code: Hexamerin 70c (686 aa).

The first 19 residues, 1 to 19, serve as a signal peptide directing secretion; the sequence is MLSKVVLLVALAAICGAQG. One can recognise a Hemocyanin N-terminal domain in the interval 32–155; the sequence is FLHKQKKIFD…IAVLYRPDTK (124 aa). In terms of domain architecture, Hemocyanin middle spans 161-431; it reads AIYEIYPNYF…MLYQNILSYF (271 aa). Residues asparagine 205 and asparagine 662 are each glycosylated (N-linked (GlcNAc...) asparagine). Residues 440–676 enclose the Hemocyanin C-terminal domain; the sequence is QYSQSELQMP…NMYFKDVFIY (237 aa).

Belongs to the hemocyanin/hexamerin family. As to quaternary structure, probable homohexamer. As to expression, expressed in the fat body and secreted into the hemolymph (at protein level). Present in trophocytes and oenocytes of the fat body (at protein level). Not expressed in ovary or testis.

It localises to the secreted. The protein localises to the nucleus. It is found in the cytoplasm. Its subcellular location is the cytoplasmic granule. Functionally, storage protein that may function as a nutrient supply to compensate for lack of dietary proteins during metamorphosis and egg production. This chain is Hexamerin 70c, found in Apis mellifera (Honeybee).